The sequence spans 480 residues: Glutamate--tRNA ligase (480 aa).

The short motif at 21–31 is the 'HIGH' region element; it reads PSPTGYLHVGG. Cysteine 110, cysteine 112, cysteine 137, and histidine 139 together coordinate Zn(2+). The 'KMSKS' region signature appears at 248 to 252; sequence KLSKR. Lysine 251 serves as a coordination point for ATP.

This sequence belongs to the class-I aminoacyl-tRNA synthetase family. Glutamate--tRNA ligase type 1 subfamily. As to quaternary structure, monomer. It depends on Zn(2+) as a cofactor.

It is found in the cytoplasm. It carries out the reaction tRNA(Glu) + L-glutamate + ATP = L-glutamyl-tRNA(Glu) + AMP + diphosphate. In terms of biological role, catalyzes the attachment of glutamate to tRNA(Glu) in a two-step reaction: glutamate is first activated by ATP to form Glu-AMP and then transferred to the acceptor end of tRNA(Glu). This is Glutamate--tRNA ligase from Histophilus somni (strain 129Pt) (Haemophilus somnus).